The sequence spans 284 residues: 4-diphosphocytidyl-2-C-methyl-D-erythritol kinase (284 aa).

Residue Lys14 is part of the active site. Residue 98-108 (PMGGGLGGGSS) participates in ATP binding. Asp140 is an active-site residue.

Belongs to the GHMP kinase family. IspE subfamily.

It catalyses the reaction 4-CDP-2-C-methyl-D-erythritol + ATP = 4-CDP-2-C-methyl-D-erythritol 2-phosphate + ADP + H(+). Its pathway is isoprenoid biosynthesis; isopentenyl diphosphate biosynthesis via DXP pathway; isopentenyl diphosphate from 1-deoxy-D-xylulose 5-phosphate: step 3/6. Functionally, catalyzes the phosphorylation of the position 2 hydroxy group of 4-diphosphocytidyl-2C-methyl-D-erythritol. This is 4-diphosphocytidyl-2-C-methyl-D-erythritol kinase from Shewanella putrefaciens (strain CN-32 / ATCC BAA-453).